The sequence spans 432 residues: Adenosylhomocysteinase (432 aa).

Substrate contacts are provided by Thr56, Asp131, and Glu156. An NAD(+)-binding site is contributed by 157-159 (TTT). Residues Lys186 and Asp190 each coordinate substrate. NAD(+) is bound by residues Asn191, 222-227 (GDVGKG), Glu243, 299-301 (IGH), and Asn346.

Belongs to the adenosylhomocysteinase family. The cofactor is NAD(+).

The enzyme catalyses S-adenosyl-L-homocysteine + H2O = L-homocysteine + adenosine. Its pathway is amino-acid biosynthesis; L-homocysteine biosynthesis; L-homocysteine from S-adenosyl-L-homocysteine: step 1/1. Adenosylhomocysteine is a competitive inhibitor of S-adenosyl-L-methionine-dependent methyl transferase reactions; therefore adenosylhomocysteinase may play a key role in the control of methylations via regulation of the intracellular concentration of adenosylhomocysteine. The chain is Adenosylhomocysteinase (Ahcy13) from Anopheles gambiae (African malaria mosquito).